The chain runs to 167 residues: Novel acetylcholine receptor chaperone (167 aa).

The Cytoplasmic segment spans residues 1–5 (MASPR). Residues 6 to 26 (TVTIVALSVALGLFFVFMGTI) form a helical membrane-spanning segment. The Lumenal portion of the chain corresponds to 27–61 (KLTPRLSKDAYSEMKRAYKSYVRALPLLKKMGINS). Residues 43–54 (AYKSYVRALPLL) are interaction with NGFR. Residues 62-82 (ILLRKSIGALEVACGIVMTLV) form a helical membrane-spanning segment. The Cytoplasmic segment spans residues 83-88 (PGRPKD). The chain crosses the membrane as a helical span at residues 89-109 (VANFFLLLLVLAVLFFHQLVG). The Lumenal segment spans residues 110–114 (DPLKR). A helical membrane pass occupies residues 115–132 (YAHALVFGILLTCRLLIA). Residues 133-167 (RKPEDRSSEKKPLPGNAEEQPSLYEKAPQGKVKVS) are Cytoplasmic-facing. The disordered stretch occupies residues 136–167 (EDRSSEKKPLPGNAEEQPSLYEKAPQGKVKVS).

This sequence belongs to the DoxX family. In terms of assembly, may interact with NGFR. Interacts with RPN1, RPN2 and CANX.

The protein resides in the peroxisome membrane. Its subcellular location is the cytoplasmic vesicle. It is found in the endoplasmic reticulum membrane. Its function is as follows. Molecular chaperone which mediates the proper assembly and functional expression of the nicotinic acetylcholine receptors (nAChRs) throughout the brain. Essential for the proper folding, assembly, function and surface trafficking of alpha-7 (CHRNA7), alpha-4-beta-2, alpha-3-beta-2 and alpha-3-beta-4 receptors. Stably associates with ribophorin-1 (RPN1) and ribophorin-2 (RPN2) (components of the oligosaccharyl transferase (OST) complex) and with calnexin (CANX), both of which are critical for NACHO-mediated effects on CHRNA7 assembly and function. Facilitates the proper folding and assembly of alpha-6-beta-2 and alpha-6-beta-2-beta-3 receptors and acts at early stages of the nAChRs subunit assembly. Promotes the expression of the alpha-4(2):beta-2(3) stoichiometric form over the alpha-4(3):beta-2(2) form. This Macaca fascicularis (Crab-eating macaque) protein is Novel acetylcholine receptor chaperone (TMEM35A).